The chain runs to 235 residues: Urease accessory protein UreF (235 aa).

Belongs to the UreF family. As to quaternary structure, ureD, UreF and UreG form a complex that acts as a GTP-hydrolysis-dependent molecular chaperone, activating the urease apoprotein by helping to assemble the nickel containing metallocenter of UreC. The UreE protein probably delivers the nickel.

Its subcellular location is the cytoplasm. Functionally, required for maturation of urease via the functional incorporation of the urease nickel metallocenter. This chain is Urease accessory protein UreF, found in Haemophilus influenzae (strain 86-028NP).